Consider the following 417-residue polypeptide: Diaminopimelate decarboxylase (417 aa).

Lysine 61 carries the post-translational modification N6-(pyridoxal phosphate)lysine. Pyridoxal 5'-phosphate is bound by residues glycine 240 and 275-278 (EPGR). Residues arginine 278, arginine 314, and tyrosine 318 each contribute to the substrate site. Cysteine 344 acts as the Proton donor in catalysis. Positions 345 and 372 each coordinate substrate. Pyridoxal 5'-phosphate is bound at residue tyrosine 372.

The protein belongs to the Orn/Lys/Arg decarboxylase class-II family. LysA subfamily. In terms of assembly, homodimer. The cofactor is pyridoxal 5'-phosphate.

The catalysed reaction is meso-2,6-diaminopimelate + H(+) = L-lysine + CO2. It functions in the pathway amino-acid biosynthesis; L-lysine biosynthesis via DAP pathway; L-lysine from DL-2,6-diaminopimelate: step 1/1. Its function is as follows. Specifically catalyzes the decarboxylation of meso-diaminopimelate (meso-DAP) to L-lysine. This is Diaminopimelate decarboxylase (lysA) from Vibrio cholerae serotype O1 (strain ATCC 39315 / El Tor Inaba N16961).